A 240-amino-acid chain; its full sequence is MGQKIHPVGFRLGITKEHKSRWFADKYHYPELLQEDRKIRQYVEKNLSNAGISDIRIERKADQVDIEIHTARPGVVVGRGGSGIEALRVGLQNALGGHRQIRINVVEVARVDADATLIAEYIAQQLERRVSFRRVVRQAIQRAQRAEVKGIKVQVSGRLNGAEIARTEWIREGRVPLHTLRADIDFAYRTAKTIYGILGVKIWVFKGEIIPGQEEQAPAQPATTPKRQRRRQQFEDRSNE.

Residues 39–109 (IRQYVEKNLS…QIRINVVEVA (71 aa)) form the KH type-2 domain. A disordered region spans residues 214 to 240 (EEQAPAQPATTPKRQRRRQQFEDRSNE).

This sequence belongs to the universal ribosomal protein uS3 family. As to quaternary structure, part of the 30S ribosomal subunit. Forms a tight complex with proteins S10 and S14.

Its function is as follows. Binds the lower part of the 30S subunit head. Binds mRNA in the 70S ribosome, positioning it for translation. This Gloeothece citriformis (strain PCC 7424) (Cyanothece sp. (strain PCC 7424)) protein is Small ribosomal subunit protein uS3.